The chain runs to 341 residues: Anthranilate phosphoribosyltransferase (341 aa).

Residues Gly80, 83 to 84 (GD), Thr88, 90 to 93 (NIST), 108 to 116 (KHGNRAVSS), and Ser120 each bind 5-phospho-alpha-D-ribose 1-diphosphate. Residue Gly80 participates in anthranilate binding. Position 92 (Ser92) interacts with Mg(2+). Residue Asn111 participates in anthranilate binding. Arg166 is an anthranilate binding site. Positions 225 and 226 each coordinate Mg(2+).

Belongs to the anthranilate phosphoribosyltransferase family. As to quaternary structure, homodimer. Requires Mg(2+) as cofactor.

It carries out the reaction N-(5-phospho-beta-D-ribosyl)anthranilate + diphosphate = 5-phospho-alpha-D-ribose 1-diphosphate + anthranilate. It participates in amino-acid biosynthesis; L-tryptophan biosynthesis; L-tryptophan from chorismate: step 2/5. Catalyzes the transfer of the phosphoribosyl group of 5-phosphorylribose-1-pyrophosphate (PRPP) to anthranilate to yield N-(5'-phosphoribosyl)-anthranilate (PRA). This chain is Anthranilate phosphoribosyltransferase, found in Priestia megaterium (strain ATCC 12872 / QMB1551) (Bacillus megaterium).